A 469-amino-acid polypeptide reads, in one-letter code: Glutamine synthetase (469 aa).

The 85-residue stretch at 16 to 100 (EGVQYVDLRF…MICDIYDPVT (85 aa)) folds into the GS beta-grasp domain. One can recognise a GS catalytic domain in the interval 108-469 (TRYIAQKAEQ…PKEFELYWDI (362 aa)). Mg(2+) is bound by residues Glu133 and Glu135. An ATP-binding site is contributed by Glu207. Glu212 and Glu220 together coordinate Mg(2+). L-glutamate contacts are provided by residues 264 to 265 (NG) and Gly265. A Mg(2+)-binding site is contributed by His269. Residues 271–273 (HFS) and Ser273 each bind ATP. 3 residues coordinate L-glutamate: Arg321, Glu327, and Arg339. 3 residues coordinate ATP: Arg339, Arg344, and Lys353. A Mg(2+)-binding site is contributed by Glu358. L-glutamate is bound at residue Arg360. An O-AMP-tyrosine modification is found at Tyr398.

It belongs to the glutamine synthetase family. Oligomer of 12 subunits arranged in the form of two hexagons. Mg(2+) is required as a cofactor.

It is found in the cytoplasm. The catalysed reaction is L-glutamate + NH4(+) + ATP = L-glutamine + ADP + phosphate + H(+). The activity of this enzyme could be controlled by adenylation under conditions of abundant glutamine. In terms of biological role, catalyzes the ATP-dependent biosynthesis of glutamine from glutamate and ammonia. The protein is Glutamine synthetase of Aquifex aeolicus (strain VF5).